The chain runs to 229 residues: Protein GrpE (229 aa).

Disordered stretches follow at residues 1–49 (MTEG…SANS) and 207–229 (DSTA…EDGD). Residues 13 to 24 (TDKRRIDPDTGE) show a composition bias toward basic and acidic residues.

The protein belongs to the GrpE family. As to quaternary structure, homodimer.

It localises to the cytoplasm. Its function is as follows. Participates actively in the response to hyperosmotic and heat shock by preventing the aggregation of stress-denatured proteins, in association with DnaK and GrpE. It is the nucleotide exchange factor for DnaK and may function as a thermosensor. Unfolded proteins bind initially to DnaJ; upon interaction with the DnaJ-bound protein, DnaK hydrolyzes its bound ATP, resulting in the formation of a stable complex. GrpE releases ADP from DnaK; ATP binding to DnaK triggers the release of the substrate protein, thus completing the reaction cycle. Several rounds of ATP-dependent interactions between DnaJ, DnaK and GrpE are required for fully efficient folding. This is Protein GrpE from Mycobacterium leprae (strain TN).